The chain runs to 223 residues: Putative 3-methyladenine DNA glycosylase (223 aa).

The protein belongs to the DNA glycosylase MPG family.

In Pseudomonas syringae pv. syringae (strain B728a), this protein is Putative 3-methyladenine DNA glycosylase.